The primary structure comprises 60 residues: MAVQQNKKSRSARDMRRSHDALEASTLSVEKTTGEIHLRHHVSPEGVYRGRKVIDKGADE.

Positions 1-28 (MAVQQNKKSRSARDMRRSHDALEASTLS) are disordered. A compositionally biased stretch (basic and acidic residues) spans 11–22 (SARDMRRSHDAL).

It belongs to the bacterial ribosomal protein bL32 family.

The chain is Large ribosomal subunit protein bL32 from Pseudomonas savastanoi pv. phaseolicola (strain 1448A / Race 6) (Pseudomonas syringae pv. phaseolicola (strain 1448A / Race 6)).